Consider the following 515-residue polypeptide: Chromosomal replication initiator protein DnaA (515 aa).

Positions 1-89 (MVADQAVLSS…LLAISIDANL (89 aa)) are domain I, interacts with DnaA modulators. The domain II stretch occupies residues 89 to 172 (LQPPRTPSSE…APPSTSAETS (84 aa)). Disordered regions lie at residues 90-130 (QPPR…SRRA) and 142-171 (PPAD…SAET). Composition is skewed to low complexity over residues 102 to 114 (SSLA…AAAP) and 143 to 160 (PADV…NGKP). Positions 173 to 389 (RLNDRYHFET…GALIRVTAFA (217 aa)) are domain III, AAA+ region. Positions 217, 219, 220, and 221 each coordinate ATP. The tract at residues 390 to 515 (SLNRQTVDIE…NEIKRKQRGA (126 aa)) is domain IV, binds dsDNA.

The protein belongs to the DnaA family. As to quaternary structure, oligomerizes as a right-handed, spiral filament on DNA at oriC.

It localises to the cytoplasm. Its function is as follows. Plays an essential role in the initiation and regulation of chromosomal replication. ATP-DnaA binds to the origin of replication (oriC) to initiate formation of the DNA replication initiation complex once per cell cycle. Binds the DnaA box (a 9 base pair repeat at the origin) and separates the double-stranded (ds)DNA. Forms a right-handed helical filament on oriC DNA; dsDNA binds to the exterior of the filament while single-stranded (ss)DNA is stabiized in the filament's interior. The ATP-DnaA-oriC complex binds and stabilizes one strand of the AT-rich DNA unwinding element (DUE), permitting loading of DNA polymerase. After initiation quickly degrades to an ADP-DnaA complex that is not apt for DNA replication. Binds acidic phospholipids. The polypeptide is Chromosomal replication initiator protein DnaA (Micrococcus luteus (strain ATCC 4698 / DSM 20030 / JCM 1464 / CCM 169 / CCUG 5858 / IAM 1056 / NBRC 3333 / NCIMB 9278 / NCTC 2665 / VKM Ac-2230) (Micrococcus lysodeikticus)).